Consider the following 390-residue polypeptide: Serpin B4 (390 aa).

Methionine 1 carries the post-translational modification N-acetylmethionine.

Belongs to the serpin family. Ov-serpin subfamily. As to expression, squamous cells.

Its subcellular location is the cytoplasm. In terms of biological role, may act as a protease inhibitor to modulate the host immune response against tumor cells. In Homo sapiens (Human), this protein is Serpin B4 (SERPINB4).